A 203-amino-acid polypeptide reads, in one-letter code: Superoxide dismutase [Mn] (203 aa).

Residues His-27, His-81, Asp-164, and His-168 each contribute to the Mn(2+) site.

Belongs to the iron/manganese superoxide dismutase family. Homodimer. It depends on Mn(2+) as a cofactor.

It catalyses the reaction 2 superoxide + 2 H(+) = H2O2 + O2. Functionally, destroys superoxide anion radicals which are normally produced within the cells and which are toxic to biological systems. Partially complements double sodA-sodB deletions in E.coli. The protein is Superoxide dismutase [Mn] of Pseudomonas aeruginosa (strain ATCC 15692 / DSM 22644 / CIP 104116 / JCM 14847 / LMG 12228 / 1C / PRS 101 / PAO1).